The chain runs to 1790 residues: Vitellogenin (1790 aa).

An N-terminal signal peptide occupies residues 1-19 (MWSTVALCLLVGLSYVSSS). Residues 23-799 (WKDNTEYVYS…SAESSFPKIM (777 aa)) form the Vitellogenin domain. N-linked (GlcNAc...) asparagine glycans are attached at residues Asn-219 and Asn-297. The span at 342-353 (LMEDSSSEESSE) shows a compositional bias: acidic residues. The segment at 342 to 400 (LMEDSSSEESSEQEMTHRRFRRSANSLTKQWRESSEEWNQQQQQPRPQLTRAPHSPLLP) is disordered. Over residues 378 to 389 (EWNQQQQQPRPQ) the composition is skewed to low complexity. N-linked (GlcNAc...) asparagine glycosylation is found at Asn-554, Asn-573, Asn-893, Asn-1345, Asn-1416, Asn-1430, Asn-1480, Asn-1699, and Asn-1735. The VWFD domain occupies 1466-1675 (PTCVIDQTTA…SYQVEKGQQW (210 aa)). Cysteines 1468 and 1638 form a disulfide.

It is found in the secreted. In terms of biological role, precursor of the egg-yolk proteins that are sources of nutrients during embryonic development. The protein is Vitellogenin (VTG) of Anthonomus grandis (Mexican cotton boll weevil).